A 167-amino-acid polypeptide reads, in one-letter code: Phosphopantetheine adenylyltransferase (167 aa).

Threonine 9 is a substrate binding site. ATP is bound by residues 9–10 and histidine 17; that span reads TF. Lysine 41, leucine 73, and arginine 87 together coordinate substrate. Residues 88–90, glutamate 98, and 123–129 contribute to the ATP site; these read GLR and YQFISGT.

Belongs to the bacterial CoaD family. As to quaternary structure, homohexamer. The cofactor is Mg(2+).

The protein localises to the cytoplasm. The catalysed reaction is (R)-4'-phosphopantetheine + ATP + H(+) = 3'-dephospho-CoA + diphosphate. It functions in the pathway cofactor biosynthesis; coenzyme A biosynthesis; CoA from (R)-pantothenate: step 4/5. Functionally, reversibly transfers an adenylyl group from ATP to 4'-phosphopantetheine, yielding dephospho-CoA (dPCoA) and pyrophosphate. This Ralstonia pickettii (strain 12J) protein is Phosphopantetheine adenylyltransferase.